The chain runs to 854 residues: Disrupted in schizophrenia 1 protein (854 aa).

Over residues 1–18 (MPGGGPQGAPAAAGGGGV) the composition is skewed to gly residues. Disordered regions lie at residues 1 to 24 (MPGG…RAGS), 179 to 205 (SAEL…SHSA), 221 to 257 (GERG…GPHE), and 278 to 323 (AQAA…SGDA). The interaction with MAP1A stretch occupies residues 1–292 (MPGGGPQGAP…NSSRPERDMH (292 aa)). An Interaction with FBXW7 motif is present at residues 197 to 203 (PTPPGSH). The segment covering 285–295 (SRPERDMHSLP) has biased composition (basic and acidic residues). The interval 293-696 (SLPDMDPGSS…LGKVWEADLE (404 aa)) is interaction with TRAF3IP1. Over residues 296–309 (DMDPGSSSSLDPSL) the composition is skewed to low complexity. Coiled coils occupy residues 366-394 (ENDD…HFQL), 452-505 (ITRR…CDLT), and 602-666 (WTAK…SVKE). K372 is covalently cross-linked (Glycyl lysine isopeptide (Lys-Gly) (interchain with G-Cter in ubiquitin)). The tract at residues 440–597 (LEPTAQDSLH…LLEAKMHAIS (158 aa)) is required for localization to punctate cytoplasmic foci. The interval 446 to 854 (DSLHVSITRR…MTAGVHEAQA (409 aa)) is necessary and sufficient for interaction with PCNT and localization at the centrosome. The tract at residues 598-854 (GNHFWTAKDL…MTAGVHEAQA (257 aa)) is interaction with ATF4 and ATF5. Residues 716–739 (VEDERQMDDLEGAAPPIPPRLHSE) form a disordered region. An interaction with PAFAH1B1 region spans residues 727-854 (GAAPPIPPRL…MTAGVHEAQA (128 aa)). The stretch at 802–830 (SHDEDLIQSLRRELQMVKETLQAMILQLQ) forms a coiled coil. Residues 802–835 (SHDEDLIQSLRRELQMVKETLQAMILQLQPAKEA) are interaction with NDEL1.

As to quaternary structure, interacts with NDEL1. Interacts with CCDC88A (via C-terminus); the interaction is direct. Interacts with GSK3B. Interacts with tubulin alpha, ACTN2, ANKHD1, ATF4, ATF5, CEP63, EIF3S3, MAP1A, NDEL1, PAFAH1B1, RANBP9, SPTBN4, SYNE1 and TRAF3IP1. Interaction with microtubules may be mediated in part by TRAF3IP1. Interacts (via C-terminal) with PCNT. Interacts with CHCHD6. Interacts with CCDC141. Interacts with FBXW7, the substrate-recognition component of a SCF (SKP1-CUL1-F-box protein) E3 ubiquitin-protein ligase complex; the interaction targets DISC1 for proteasomal degradation. Interacts with ZNF365. Interacts with ATF4; inhibiting ATF4 transcription factor activity by disrupting ATF4 dimerization and DNA-binding. Interacts with PDE4B (isoform PDE4B5). In terms of processing, ubiquitinated. Ubiquitination with 'Lys-48'-linked polyubiquitin chains leads to its proteasomal degradation. In terms of tissue distribution, ubiquitous. Highly expressed in the dentate gyrus of the hippocampus. Also expressed in the temporal and parahippocampal cortices and cells of the white matter.

The protein localises to the cytoplasm. Its subcellular location is the cytoskeleton. It is found in the mitochondrion. The protein resides in the microtubule organizing center. It localises to the centrosome. The protein localises to the postsynaptic density. Its function is as follows. Involved in the regulation of multiple aspects of embryonic and adult neurogenesis. Required for neural progenitor proliferation in the ventrical/subventrical zone during embryonic brain development and in the adult dentate gyrus of the hippocampus. Participates in the Wnt-mediated neural progenitor proliferation as a positive regulator by modulating GSK3B activity and CTNNB1 abundance. Plays a role as a modulator of the AKT-mTOR signaling pathway controlling the tempo of the process of newborn neurons integration during adult neurogenesis, including neuron positioning, dendritic development and synapse formation. Inhibits the activation of AKT-mTOR signaling upon interaction with CCDC88A. Regulates the migration of early-born granule cell precursors toward the dentate gyrus during the hippocampal development. Inhibits ATF4 transcription factor activity in neurons by disrupting ATF4 dimerization and DNA-binding. Plays a role, together with PCNT, in the microtubule network formation. The sequence is that of Disrupted in schizophrenia 1 protein from Homo sapiens (Human).